The following is a 381-amino-acid chain: uncharacterized protein (381 aa).

Residues 331–340 show a composition bias toward polar residues; it reads MQNGYANNGR. The disordered stretch occupies residues 331–381; it reads MQNGYANNGRNHQRERFERPEKNSKKNKFLPFNGSNKEKKRDKLKKNCVIM. Residues 342–354 show a composition bias toward basic and acidic residues; the sequence is HQRERFERPEKNS. Residues 372 to 381 are compositionally biased toward basic residues; it reads DKLKKNCVIM.

It is found in the cytoplasm. Its subcellular location is the nucleus. This is an uncharacterized protein from Saccharomyces cerevisiae (strain ATCC 204508 / S288c) (Baker's yeast).